Reading from the N-terminus, the 474-residue chain is Transcription factor SOX-4 (474 aa).

Residues 1–10 (MVQQTNNAEN) are compositionally biased toward polar residues. The tract at residues 1–58 (MVQQTNNAENTEALLAGESSDSGAGLELGIASSPTPGSTASTGGKADDPSWCKTPSGH) is disordered. The span at 31–44 (ASSPTPGSTASTGG) shows a compositional bias: low complexity. Residues 59-127 (IKRPMNAFMV…KHMADYPDYK (69 aa)) constitute a DNA-binding region (HMG box). Lys-95 is modified (N6-acetyllysine). Disordered regions lie at residues 128–228 (YRPR…GGGK), 262–286 (ARTPSASASASSAASASAALAAPGK), and 302–416 (LGTS…NFES). Positions 138–149 (NANSSSSAAASS) are enriched in low complexity. Positions 158–189 (VGGSGGGGHGGGGGGGSSNAGGGGGGASGGGA) are enriched in gly residues. Low complexity-rich tracts occupy residues 266 to 283 (SASASASSAASASAALAA), 304 to 320 (TSSSPVGGVGAGADPSD), 336 to 354 (APSLSGRSSAASSPAAGRS), and 366 to 396 (AASPAPSSAPSHASSSASSHSSSSSSSGSSS). A compositionally biased stretch (acidic residues) spans 397 to 406 (SDDEFEDDLL). The segment covering 407 to 416 (DLNPSSNFES) has biased composition (low complexity). Positions 426-434 (SALDRDLDF) match the 9aaTAD motif.

In terms of assembly, interacts with UBE2I. Interacts with HDAC1; interaction inhibits the transcriptional activator activity. Acetylation at Lys-95 by KAT5 promotes the transcription activator activity and is required during myoblast differentiation. Acetylation by KAT5 abolishes the interaction between SOX4 and HDAC1 and switches SOX4 into a transcriptional activator. As to expression, testis, brain, and heart.

It is found in the nucleus. Transcriptional activator that binds with high affinity to the T-cell enhancer motif 5'-AACAAAG-3' motif. Required for IL17A-producing Vgamma2-positive gamma-delta T-cell maturation and development, via binding to regulator loci of RORC to modulate expression. Involved in skeletal myoblast differentiation by promoting gene expression of CALD1. This Homo sapiens (Human) protein is Transcription factor SOX-4.